A 264-amino-acid chain; its full sequence is Indole-3-glycerol phosphate synthase (264 aa).

This sequence belongs to the TrpC family.

The enzyme catalyses 1-(2-carboxyphenylamino)-1-deoxy-D-ribulose 5-phosphate + H(+) = (1S,2R)-1-C-(indol-3-yl)glycerol 3-phosphate + CO2 + H2O. It participates in amino-acid biosynthesis; L-tryptophan biosynthesis; L-tryptophan from chorismate: step 4/5. This Xylella fastidiosa (strain M23) protein is Indole-3-glycerol phosphate synthase.